The sequence spans 71 residues: UPF0346 protein SMU_1621c (71 aa).

Belongs to the UPF0346 family.

In Streptococcus mutans serotype c (strain ATCC 700610 / UA159), this protein is UPF0346 protein SMU_1621c.